The following is a 347-amino-acid chain: Selenide, water dikinase (347 aa).

The active site involves cysteine 17. Residues lysine 20 and 48–50 (TRD) contribute to the ATP site. Residue aspartate 51 participates in Mg(2+) binding. Residues aspartate 68, aspartate 91, and 139-141 (GHS) contribute to the ATP site. Position 91 (aspartate 91) interacts with Mg(2+). Aspartate 227 is a binding site for Mg(2+).

Belongs to the selenophosphate synthase 1 family. Class I subfamily. In terms of assembly, homodimer. The cofactor is Mg(2+).

It catalyses the reaction hydrogenselenide + ATP + H2O = selenophosphate + AMP + phosphate + 2 H(+). Functionally, synthesizes selenophosphate from selenide and ATP. This chain is Selenide, water dikinase, found in Escherichia coli O157:H7.